The following is a 450-amino-acid chain: 23S rRNA (uracil(1939)-C(5))-methyltransferase RlmD (450 aa).

The TRAM domain occupies 15 to 73; it reads KAVPAKNLTVTVASLDPFGQGVARHEGKTVFVTGVLPGEQAEVQLTEEKRQFSHAKLKR. Positions 86, 92, 95, and 173 each coordinate [4Fe-4S] cluster. Residues Gln276, Phe305, Asn310, Glu326, Asn353, and Asp374 each contribute to the S-adenosyl-L-methionine site. Cys400 acts as the Nucleophile in catalysis.

This sequence belongs to the class I-like SAM-binding methyltransferase superfamily. RNA M5U methyltransferase family. RlmD subfamily.

The enzyme catalyses uridine(1939) in 23S rRNA + S-adenosyl-L-methionine = 5-methyluridine(1939) in 23S rRNA + S-adenosyl-L-homocysteine + H(+). Catalyzes the formation of 5-methyl-uridine at position 1939 (m5U1939) in 23S rRNA. The chain is 23S rRNA (uracil(1939)-C(5))-methyltransferase RlmD from Pectobacterium atrosepticum (strain SCRI 1043 / ATCC BAA-672) (Erwinia carotovora subsp. atroseptica).